Here is a 115-residue protein sequence, read N- to C-terminus: NADH-ubiquinone oxidoreductase chain 3 (115 aa).

3 helical membrane passes run 3 to 23, 55 to 75, and 84 to 104; these read LLMA…IAFW, FFLV…LLPL, and LSAM…GLMY.

Belongs to the complex I subunit 3 family. In terms of assembly, core subunit of respiratory chain NADH dehydrogenase (Complex I) which is composed of 45 different subunits. Interacts with TMEM186. Interacts with TMEM242.

It is found in the mitochondrion inner membrane. The catalysed reaction is a ubiquinone + NADH + 5 H(+)(in) = a ubiquinol + NAD(+) + 4 H(+)(out). Functionally, core subunit of the mitochondrial membrane respiratory chain NADH dehydrogenase (Complex I) which catalyzes electron transfer from NADH through the respiratory chain, using ubiquinone as an electron acceptor. Essential for the catalytic activity of complex I. The sequence is that of NADH-ubiquinone oxidoreductase chain 3 from Sigmodon ochrognathus (Yellow-nosed cotton rat).